The following is a 180-amino-acid chain: Large ribosomal subunit protein uL6 (180 aa).

This sequence belongs to the universal ribosomal protein uL6 family. Part of the 50S ribosomal subunit.

Its function is as follows. This protein binds to the 23S rRNA, and is important in its secondary structure. It is located near the subunit interface in the base of the L7/L12 stalk, and near the tRNA binding site of the peptidyltransferase center. This Clostridium botulinum (strain Alaska E43 / Type E3) protein is Large ribosomal subunit protein uL6.